The chain runs to 255 residues: MKTIAVNSFKGGTAKTSTTLHLGAALAQYHQARVLLIDFDAQANLTSGLGLDPDCYDSLAVVLQGEKEIQEVIRPIQDTQLDLIPADTWLERIEVSGNLAADRYSHERLKYVLGSVQDKYDYVIIDTPPSLCWLTESALIAADYALICATPEFYSVKGLERLAGFIQGISARHPLTILGVALSFWNCRGKNNSAFAELIHKTFPGKLLNTKIRRDITVSEAAIHGKPVFATSPSARASEDYFNLTKELLILLRDI.

The protein belongs to the ParA family.

The chain is ParA family protein CPn_0805/CP_1066/CPj0805/CpB0834 from Chlamydia pneumoniae (Chlamydophila pneumoniae).